Consider the following 577-residue polypeptide: Proline--tRNA ligase (577 aa).

It belongs to the class-II aminoacyl-tRNA synthetase family. ProS type 1 subfamily. As to quaternary structure, homodimer.

Its subcellular location is the cytoplasm. It carries out the reaction tRNA(Pro) + L-proline + ATP = L-prolyl-tRNA(Pro) + AMP + diphosphate. Catalyzes the attachment of proline to tRNA(Pro) in a two-step reaction: proline is first activated by ATP to form Pro-AMP and then transferred to the acceptor end of tRNA(Pro). As ProRS can inadvertently accommodate and process non-cognate amino acids such as alanine and cysteine, to avoid such errors it has two additional distinct editing activities against alanine. One activity is designated as 'pretransfer' editing and involves the tRNA(Pro)-independent hydrolysis of activated Ala-AMP. The other activity is designated 'posttransfer' editing and involves deacylation of mischarged Ala-tRNA(Pro). The misacylated Cys-tRNA(Pro) is not edited by ProRS. In Chlamydia caviae (strain ATCC VR-813 / DSM 19441 / 03DC25 / GPIC) (Chlamydophila caviae), this protein is Proline--tRNA ligase.